The primary structure comprises 370 residues: Cysteine-type anaerobic sulfatase-maturating enzyme (370 aa).

The Radical SAM core domain occupies 1 to 227 (MPPLSLLIKP…LKNLFDFWYE (227 aa)). 2 residues coordinate [4Fe-4S] cluster: Cys15 and Cys19. Position 21 (Tyr21) interacts with S-adenosyl-L-methionine. Residue Cys22 participates in [4Fe-4S] cluster binding. Gly66, Ser122, Arg134, and Leu195 together coordinate S-adenosyl-L-methionine. The [4Fe-4S] cluster site is built by Cys255, Cys261, and Cys276. Asp277 (proton acceptor) is an active-site residue. Positions 317, 320, 326, 330, and 348 each coordinate [4Fe-4S] cluster.

Belongs to the radical SAM superfamily. Anaerobic sulfatase-maturating enzyme family. Monomer. It depends on [4Fe-4S] cluster as a cofactor.

The enzyme catalyses L-cysteinyl-[sulfatase] + S-adenosyl-L-methionine + H2O = 3-oxo-L-alanyl-[sulfatase] + hydrogen sulfide + 5'-deoxyadenosine + L-methionine + 2 H(+). It functions in the pathway protein modification; sulfatase oxidation. Involved in 'Cys-type' sulfatase maturation under anaerobic conditions. Catalyzes the post-translational modification of cysteine ('Cys-51' in the arylsulfatase CPF_0221) into 3-oxoalanine (also known as C(alpha)-formylglycine (FGly)), by a free radical chemical mechanism initiated via the reductive cleavage of S-adenosyl-L-methionine (SAM). Is also able to oxidize a serine residue in a synthetic substrate to FGly in vitro, and in a serine variant of a Cys-type sulfatase in vivo, but this activity is not physiological. Converts threonyl peptides to the corresponding ketone product, and also allo-threonyl peptides, but with a significantly reduced efficiency. The chain is Cysteine-type anaerobic sulfatase-maturating enzyme from Clostridium perfringens (strain ATCC 13124 / DSM 756 / JCM 1290 / NCIMB 6125 / NCTC 8237 / Type A).